The following is a 314-amino-acid chain: DNA-directed RNA polymerase subunit alpha (314 aa).

Residues 1–228 are alpha N-terminal domain (alpha-NTD); that stretch reads MIEIEKPKIE…EHLSIFVNLT (228 aa). The segment at 245–314 is alpha C-terminal domain (alpha-CTD); sequence KEKVLEMTIE…DLGLSLRNEN (70 aa).

The protein belongs to the RNA polymerase alpha chain family. As to quaternary structure, homodimer. The RNAP catalytic core consists of 2 alpha, 1 beta, 1 beta' and 1 omega subunit. When a sigma factor is associated with the core the holoenzyme is formed, which can initiate transcription.

It catalyses the reaction RNA(n) + a ribonucleoside 5'-triphosphate = RNA(n+1) + diphosphate. Functionally, DNA-dependent RNA polymerase catalyzes the transcription of DNA into RNA using the four ribonucleoside triphosphates as substrates. This Listeria innocua serovar 6a (strain ATCC BAA-680 / CLIP 11262) protein is DNA-directed RNA polymerase subunit alpha.